Here is a 473-residue protein sequence, read N- to C-terminus: Photosystem II CP43 reaction center protein (473 aa).

Residues 1–14 constitute a propeptide that is removed on maturation; sequence MKTLYSLRRFYPVE. An N-acetylthreonine modification is found at T15. Position 15 is a phosphothreonine (T15). The next 5 helical transmembrane spans lie at 69–93, 134–155, 178–200, 255–275, and 291–312; these read LFEV…PHLA, LIGP…KDRS, KALY…RKIT, KPFA…LSYS, and WFNN…ASQA. E367 is a [CaMn4O5] cluster binding site. A helical transmembrane segment spans residues 447 to 471; the sequence is RARAAAAGFEKGIDRDFEPVLSMNP.

It belongs to the PsbB/PsbC family. PsbC subfamily. In terms of assembly, PSII is composed of 1 copy each of membrane proteins PsbA, PsbB, PsbC, PsbD, PsbE, PsbF, PsbH, PsbI, PsbJ, PsbK, PsbL, PsbM, PsbT, PsbX, PsbY, PsbZ, Psb30/Ycf12, at least 3 peripheral proteins of the oxygen-evolving complex and a large number of cofactors. It forms dimeric complexes. It depends on Binds multiple chlorophylls and provides some of the ligands for the Ca-4Mn-5O cluster of the oxygen-evolving complex. It may also provide a ligand for a Cl- that is required for oxygen evolution. PSII binds additional chlorophylls, carotenoids and specific lipids. as a cofactor.

The protein localises to the plastid. It is found in the chloroplast thylakoid membrane. Its function is as follows. One of the components of the core complex of photosystem II (PSII). It binds chlorophyll and helps catalyze the primary light-induced photochemical processes of PSII. PSII is a light-driven water:plastoquinone oxidoreductase, using light energy to abstract electrons from H(2)O, generating O(2) and a proton gradient subsequently used for ATP formation. In Cycas taitungensis (Prince sago), this protein is Photosystem II CP43 reaction center protein.